Here is a 382-residue protein sequence, read N- to C-terminus: D-galactonate dehydratase (382 aa).

Asp-183 provides a ligand contact to Mg(2+). His-185 (proton donor) is an active-site residue. 2 residues coordinate Mg(2+): Glu-209 and Glu-235. His-285 (proton acceptor) is an active-site residue.

The protein belongs to the mandelate racemase/muconate lactonizing enzyme family. GalD subfamily. The cofactor is Mg(2+).

The catalysed reaction is D-galactonate = 2-dehydro-3-deoxy-D-galactonate + H2O. The protein operates within carbohydrate acid metabolism; D-galactonate degradation; D-glyceraldehyde 3-phosphate and pyruvate from D-galactonate: step 1/3. Catalyzes the dehydration of D-galactonate to 2-keto-3-deoxy-D-galactonate. In Xanthomonas campestris pv. campestris (strain 8004), this protein is D-galactonate dehydratase.